The following is a 548-amino-acid chain: Folylpolyglutamate synthase (548 aa).

An ATP-binding site is contributed by 130–133 (GKGS). Ser-157, Glu-234, and His-262 together coordinate Mg(2+). Positions 382 and 396 each coordinate ATP.

The protein belongs to the folylpolyglutamate synthase family. A monovalent cation serves as cofactor.

Its subcellular location is the mitochondrion inner membrane. The protein resides in the mitochondrion matrix. The protein localises to the cytoplasm. It catalyses the reaction (6S)-5,6,7,8-tetrahydrofolyl-(gamma-L-Glu)(n) + L-glutamate + ATP = (6S)-5,6,7,8-tetrahydrofolyl-(gamma-L-Glu)(n+1) + ADP + phosphate + H(+). It functions in the pathway cofactor biosynthesis; tetrahydrofolylpolyglutamate biosynthesis. Functionally, catalyzes conversion of folates to polyglutamate derivatives allowing concentration of folate compounds in the cell and the intracellular retention of these cofactors, which are important substrates for most of the folate-dependent enzymes that are involved in one-carbon transfer reactions involved in purine, pyrimidine and amino acid synthesis. Required for methionine synthesis and maintenance of intact mitochondrial DNA. Involved in telomere maintenance. The sequence is that of Folylpolyglutamate synthase from Saccharomyces cerevisiae (strain FostersO) (Baker's yeast).